The sequence spans 194 residues: Lysozyme g-like protein 1 (194 aa).

Residues 1–19 form the signal peptide; that stretch reads MSALWLLLGLLALMDLSES. 2 disulfides stabilise this stretch: cysteine 24/cysteine 80 and cysteine 38/cysteine 49.

This sequence belongs to the glycosyl hydrolase 23 family.

Its subcellular location is the secreted. This Homo sapiens (Human) protein is Lysozyme g-like protein 1 (LYG1).